The primary structure comprises 206 residues: Xanthine phosphoribosyltransferase (206 aa).

Xanthine-binding residues include L28 and N35. 136–140 (ANGQA) provides a ligand contact to 5-phospho-alpha-D-ribose 1-diphosphate. Residue K164 coordinates xanthine.

The protein belongs to the purine/pyrimidine phosphoribosyltransferase family. Xpt subfamily. As to quaternary structure, homodimer.

It localises to the cytoplasm. The catalysed reaction is XMP + diphosphate = xanthine + 5-phospho-alpha-D-ribose 1-diphosphate. The protein operates within purine metabolism; XMP biosynthesis via salvage pathway; XMP from xanthine: step 1/1. Converts the preformed base xanthine, a product of nucleic acid breakdown, to xanthosine 5'-monophosphate (XMP), so it can be reused for RNA or DNA synthesis. The protein is Xanthine phosphoribosyltransferase of Oenococcus oeni (strain ATCC BAA-331 / PSU-1).